The following is a 583-amino-acid chain: Leucine-rich repeat-containing protein 47 (583 aa).

Alanine 2 bears the N-acetylalanine mark. LRR repeat units lie at residues 76–95, 100–121, 130–152, 154–175, 180–202, 203–225, and 226–246; these read QLHS…SPEL, ALRV…QGLG, QLQS…ARCA, RLQS…LFRP, LLSE…AHLA, SLKT…ADCP, and KLKE…EKMV. The tract at residues 260–300 is disordered; that stretch reads VGGRGGGKGKGRAEGSEKEESRRKRRERKQRREGGDGEEQD. Basic and acidic residues predominate over residues 270 to 281; the sequence is GRAEGSEKEESR. A phosphoserine mark is found at serine 315 and serine 431. Residues 402–437 adopt a coiled-coil conformation; sequence LGRKEAKAKELVRQLQLEAEEQRKQKKRQSVSGLHR. Phosphotyrosine is present on tyrosine 509. Positions 513 to 544 are disordered; that stretch reads NKEEGSLSDTEADAVSGQLPDPTTNPSAGKDG. Phosphoserine is present on residues serine 518 and serine 520.

The protein is Leucine-rich repeat-containing protein 47 (LRRC47) of Homo sapiens (Human).